The chain runs to 122 residues: Large ribosomal subunit protein uL14 (122 aa).

The protein belongs to the universal ribosomal protein uL14 family. In terms of assembly, part of the 50S ribosomal subunit. Forms a cluster with proteins L3 and L19. In the 70S ribosome, L14 and L19 interact and together make contacts with the 16S rRNA in bridges B5 and B8.

Binds to 23S rRNA. Forms part of two intersubunit bridges in the 70S ribosome. This is Large ribosomal subunit protein uL14 from Mycoplasma pneumoniae (strain ATCC 29342 / M129 / Subtype 1) (Mycoplasmoides pneumoniae).